The sequence spans 91 residues: Soluble cytochrome b558 (91 aa).

Residues Leu-8 to Glu-88 form the Cytochrome b5 heme-binding domain. Cysteines 25 and 54 form a disulfide. 2 residues coordinate heme: His-43 and His-71.

This is Soluble cytochrome b558 from Ectothiorhodospira shaposhnikovii (Ectothiorhodospira vacuolata).